We begin with the raw amino-acid sequence, 729 residues long: Polyphosphate kinase (729 aa).

A disordered region spans residues 1-46; the sequence is MTEAQTRTEPSESSESSEAVAPAITSAADSAPEAPPATTAPAIENP. Positions 25-42 are enriched in low complexity; that stretch reads TSAADSAPEAPPATTAPA. Asn-90 serves as a coordination point for ATP. Positions 422 and 452 each coordinate Mg(2+). Catalysis depends on His-482, which acts as the Phosphohistidine intermediate. ATP is bound by residues Tyr-515, Arg-611, and His-639.

It belongs to the polyphosphate kinase 1 (PPK1) family. Mg(2+) serves as cofactor. Post-translationally, an intermediate of this reaction is the autophosphorylated ppk in which a phosphate is covalently linked to a histidine residue through a N-P bond.

It catalyses the reaction [phosphate](n) + ATP = [phosphate](n+1) + ADP. In terms of biological role, catalyzes the reversible transfer of the terminal phosphate of ATP to form a long-chain polyphosphate (polyP). The protein is Polyphosphate kinase of Mycolicibacterium gilvum (strain PYR-GCK) (Mycobacterium gilvum (strain PYR-GCK)).